We begin with the raw amino-acid sequence, 557 residues long: Fatty acyl-CoA hydrolase precursor, medium chain (557 aa).

A signal peptide spans 1–25 (MATEKNTLLSLILTAGITALVATGQ). Cysteines 93 and 122 form a disulfide. Catalysis depends on S227, which acts as the Acyl-ester intermediate. Active-site charge relay system residues include E345 and H460. N-linked (GlcNAc...) asparagine glycosylation occurs at N476.

The protein belongs to the type-B carboxylesterase/lipase family. As to expression, highest levels in uropygial gland, much lower in liver and kidney.

In terms of biological role, fatty acid biosynthesis chain termination and release of the free fatty acid product is achieved by hydrolysis of the thio ester by a thioesterase. This thioesterase may be associated with peroxisome proliferation and may play a role in the production of 3-hydroxy fatty acid diester pheromones. This Anas platyrhynchos (Mallard) protein is Fatty acyl-CoA hydrolase precursor, medium chain.